Reading from the N-terminus, the 319-residue chain is Tetrahydromethanopterin S-methyltransferase subunit H (319 aa).

This sequence belongs to the MtrH family. As to quaternary structure, the complex is composed of 8 subunits; MtrA, MtrB, MtrC, MtrD, MtrE, MtrF, MtrG and MtrH.

It carries out the reaction 5-methyl-5,6,7,8-tetrahydromethanopterin + coenzyme M + 2 Na(+)(in) = 5,6,7,8-tetrahydromethanopterin + methyl-coenzyme M + 2 Na(+)(out). The protein operates within one-carbon metabolism; methanogenesis from CO(2); methyl-coenzyme M from 5,10-methylene-5,6,7,8-tetrahydromethanopterin: step 2/2. Functionally, part of a complex that catalyzes the formation of methyl-coenzyme M and tetrahydromethanopterin from coenzyme M and methyl-tetrahydromethanopterin. This is an energy-conserving, sodium-ion translocating step. MtrH catalyzes the transfer of the methyl group from methyl-tetrahydromethanopterin to the corrinoid prosthetic group of MtrA. This Methanococcus maripaludis (strain DSM 14266 / JCM 13030 / NBRC 101832 / S2 / LL) protein is Tetrahydromethanopterin S-methyltransferase subunit H.